A 238-amino-acid polypeptide reads, in one-letter code: 2-C-methyl-D-erythritol 4-phosphate cytidylyltransferase (238 aa).

The protein belongs to the IspD/TarI cytidylyltransferase family. IspD subfamily.

It catalyses the reaction 2-C-methyl-D-erythritol 4-phosphate + CTP + H(+) = 4-CDP-2-C-methyl-D-erythritol + diphosphate. It participates in isoprenoid biosynthesis; isopentenyl diphosphate biosynthesis via DXP pathway; isopentenyl diphosphate from 1-deoxy-D-xylulose 5-phosphate: step 2/6. Functionally, catalyzes the formation of 4-diphosphocytidyl-2-C-methyl-D-erythritol from CTP and 2-C-methyl-D-erythritol 4-phosphate (MEP). This Leptospira interrogans serogroup Icterohaemorrhagiae serovar copenhageni (strain Fiocruz L1-130) protein is 2-C-methyl-D-erythritol 4-phosphate cytidylyltransferase.